The sequence spans 194 residues: Holliday junction branch migration complex subunit RuvA (194 aa).

The segment at 1–64 (MISRLTGKLV…EDAHLLFGFA (64 aa)) is domain I. Residues 65–143 (TAEERKTFRQ…AHTVTDGLFA (79 aa)) are domain II. The tract at residues 144–147 (ASPA) is flexible linker. The interval 147-194 (AADETEDIVSTLLALGYNEREAKAAVKGVPKGTDVGEGVRLALKNLLK) is domain III.

The protein belongs to the RuvA family. As to quaternary structure, homotetramer. Forms an RuvA(8)-RuvB(12)-Holliday junction (HJ) complex. HJ DNA is sandwiched between 2 RuvA tetramers; dsDNA enters through RuvA and exits via RuvB. An RuvB hexamer assembles on each DNA strand where it exits the tetramer. Each RuvB hexamer is contacted by two RuvA subunits (via domain III) on 2 adjacent RuvB subunits; this complex drives branch migration. In the full resolvosome a probable DNA-RuvA(4)-RuvB(12)-RuvC(2) complex forms which resolves the HJ.

It localises to the cytoplasm. The RuvA-RuvB-RuvC complex processes Holliday junction (HJ) DNA during genetic recombination and DNA repair, while the RuvA-RuvB complex plays an important role in the rescue of blocked DNA replication forks via replication fork reversal (RFR). RuvA specifically binds to HJ cruciform DNA, conferring on it an open structure. The RuvB hexamer acts as an ATP-dependent pump, pulling dsDNA into and through the RuvAB complex. HJ branch migration allows RuvC to scan DNA until it finds its consensus sequence, where it cleaves and resolves the cruciform DNA. This Neisseria gonorrhoeae (strain ATCC 700825 / FA 1090) protein is Holliday junction branch migration complex subunit RuvA.